Reading from the N-terminus, the 129-residue chain is Small ribosomal subunit protein uS11 (129 aa).

It belongs to the universal ribosomal protein uS11 family. In terms of assembly, part of the 30S ribosomal subunit. Interacts with proteins S7 and S18. Binds to IF-3.

In terms of biological role, located on the platform of the 30S subunit, it bridges several disparate RNA helices of the 16S rRNA. Forms part of the Shine-Dalgarno cleft in the 70S ribosome. The polypeptide is Small ribosomal subunit protein uS11 (Azoarcus sp. (strain BH72)).